The chain runs to 642 residues: Threonine--tRNA ligase (642 aa).

The region spanning Met1 to Thr61 is the TGS domain. A catalytic region spans residues Asp243 to Pro534. 3 residues coordinate Zn(2+): Cys334, His385, and His511.

Belongs to the class-II aminoacyl-tRNA synthetase family. As to quaternary structure, homodimer. It depends on Zn(2+) as a cofactor.

The protein resides in the cytoplasm. The enzyme catalyses tRNA(Thr) + L-threonine + ATP = L-threonyl-tRNA(Thr) + AMP + diphosphate + H(+). Its function is as follows. Catalyzes the attachment of threonine to tRNA(Thr) in a two-step reaction: L-threonine is first activated by ATP to form Thr-AMP and then transferred to the acceptor end of tRNA(Thr). Also edits incorrectly charged L-seryl-tRNA(Thr). The sequence is that of Threonine--tRNA ligase from Salmonella gallinarum (strain 287/91 / NCTC 13346).